A 281-amino-acid chain; its full sequence is Elongation factor Ts (281 aa).

Positions 80–83 (TDFV) are involved in Mg(2+) ion dislocation from EF-Tu.

This sequence belongs to the EF-Ts family.

It is found in the cytoplasm. Its function is as follows. Associates with the EF-Tu.GDP complex and induces the exchange of GDP to GTP. It remains bound to the aminoacyl-tRNA.EF-Tu.GTP complex up to the GTP hydrolysis stage on the ribosome. This Vibrio parahaemolyticus serotype O3:K6 (strain RIMD 2210633) protein is Elongation factor Ts.